Here is a 114-residue protein sequence, read N- to C-terminus: NLP effector protein 1 (114 aa).

This sequence belongs to the Necrosis inducing protein (NPP1) family.

The protein localises to the secreted. It is found in the host cytoplasm. Its function is as follows. Probable secreted effector that may act as a pathogen-associated molecular pattern (PAMP) recognized by the plant immune system. Seems not to induce necrosis, neither in several susceptible or resistant Vitis species nor in the dicot model plant Nicotiana benthamiana. The polypeptide is NLP effector protein 1 (Plasmopara viticola (Downy mildew of grapevine)).